The sequence spans 240 residues: Small ribosomal subunit protein uS2c (240 aa).

It belongs to the universal ribosomal protein uS2 family.

The protein resides in the plastid. The protein localises to the chloroplast. The chain is Small ribosomal subunit protein uS2c (rps2) from Euglena gracilis.